Here is a 297-residue protein sequence, read N- to C-terminus: N-acetylneuraminate lyase (297 aa).

The aceneuramate site is built by S47 and T48. The Proton donor role is filled by Y137. The active-site Schiff-base intermediate with substrate is K165. 5 residues coordinate aceneuramate: T167, G189, D191, E192, and S208.

This sequence belongs to the DapA family. NanA subfamily. In terms of assembly, homotetramer.

The protein resides in the cytoplasm. The enzyme catalyses aceneuramate = aldehydo-N-acetyl-D-mannosamine + pyruvate. It participates in amino-sugar metabolism; N-acetylneuraminate degradation; D-fructose 6-phosphate from N-acetylneuraminate: step 1/5. Catalyzes the reversible aldol cleavage of N-acetylneuraminic acid (sialic acid; Neu5Ac) to form pyruvate and N-acetylmannosamine (ManNAc) via a Schiff base intermediate. The polypeptide is N-acetylneuraminate lyase (Escherichia coli (strain SE11)).